A 389-amino-acid chain; its full sequence is Probable dual-specificity RNA methyltransferase RlmN (389 aa).

Glu114 acts as the Proton acceptor in catalysis. The 239-residue stretch at 120–358 folds into the Radical SAM core domain; that stretch reads QHYGLSVCVT…CVVRQEHGTD (239 aa). Cys127 and Cys363 form a disulfide bridge. The [4Fe-4S] cluster site is built by Cys134, Cys138, and Cys141. Residues 186-187, Ser218, 241-243, and Asn319 contribute to the S-adenosyl-L-methionine site; these read GE and SLH. Cys363 (S-methylcysteine intermediate) is an active-site residue. Residues 370 to 389 form a disordered region; that stretch reads TMKRDRQKAVAEASGKSEGK. Residues 371–389 show a composition bias toward basic and acidic residues; it reads MKRDRQKAVAEASGKSEGK.

The protein belongs to the radical SAM superfamily. RlmN family. It depends on [4Fe-4S] cluster as a cofactor.

Its subcellular location is the cytoplasm. The enzyme catalyses adenosine(2503) in 23S rRNA + 2 reduced [2Fe-2S]-[ferredoxin] + 2 S-adenosyl-L-methionine = 2-methyladenosine(2503) in 23S rRNA + 5'-deoxyadenosine + L-methionine + 2 oxidized [2Fe-2S]-[ferredoxin] + S-adenosyl-L-homocysteine. The catalysed reaction is adenosine(37) in tRNA + 2 reduced [2Fe-2S]-[ferredoxin] + 2 S-adenosyl-L-methionine = 2-methyladenosine(37) in tRNA + 5'-deoxyadenosine + L-methionine + 2 oxidized [2Fe-2S]-[ferredoxin] + S-adenosyl-L-homocysteine. In terms of biological role, specifically methylates position 2 of adenine 2503 in 23S rRNA and position 2 of adenine 37 in tRNAs. This chain is Probable dual-specificity RNA methyltransferase RlmN, found in Streptococcus thermophilus (strain CNRZ 1066).